The primary structure comprises 848 residues: Alanine--tRNA ligase (848 aa).

Residues His-553, His-557, Cys-654, and His-658 each contribute to the Zn(2+) site.

Belongs to the class-II aminoacyl-tRNA synthetase family. Requires Zn(2+) as cofactor.

The protein localises to the cytoplasm. The enzyme catalyses tRNA(Ala) + L-alanine + ATP = L-alanyl-tRNA(Ala) + AMP + diphosphate. Its function is as follows. Catalyzes the attachment of alanine to tRNA(Ala) in a two-step reaction: alanine is first activated by ATP to form Ala-AMP and then transferred to the acceptor end of tRNA(Ala). Also edits incorrectly charged Ser-tRNA(Ala) and Gly-tRNA(Ala) via its editing domain. The sequence is that of Alanine--tRNA ligase from Neorickettsia sennetsu (strain ATCC VR-367 / Miyayama) (Ehrlichia sennetsu).